The chain runs to 415 residues: Gamma-glutamyl phosphate reductase (415 aa).

It belongs to the gamma-glutamyl phosphate reductase family.

It is found in the cytoplasm. The catalysed reaction is L-glutamate 5-semialdehyde + phosphate + NADP(+) = L-glutamyl 5-phosphate + NADPH + H(+). It functions in the pathway amino-acid biosynthesis; L-proline biosynthesis; L-glutamate 5-semialdehyde from L-glutamate: step 2/2. Its function is as follows. Catalyzes the NADPH-dependent reduction of L-glutamate 5-phosphate into L-glutamate 5-semialdehyde and phosphate. The product spontaneously undergoes cyclization to form 1-pyrroline-5-carboxylate. The sequence is that of Gamma-glutamyl phosphate reductase from Bacillus cereus (strain AH187).